The following is a 65-amino-acid chain: Excisionase (65 aa).

The segment at Gly-45–Asn-65 is disordered. A compositionally biased stretch (basic and acidic residues) spans Trp-50–Asn-65.

Excisionase and integrase are necessary for the excision of prophage from the host genome by site-specific recombination at the att site. The sequence is that of Excisionase (xis) from Escherichia coli (Bacteriophage phi-80).